The chain runs to 507 residues: Pyridoxine 4-oxidase (507 aa).

Catalysis depends on histidine 448, which acts as the Proton acceptor.

This sequence belongs to the GMC oxidoreductase family. As to quaternary structure, monomer. FAD serves as cofactor.

The catalysed reaction is pyridoxine + O2 = pyridoxal + H2O2. It participates in cofactor degradation; B6 vitamer degradation; pyridoxal from pyridoxine (oxidase route): step 1/1. The chain is Pyridoxine 4-oxidase (pno) from Microbacterium luteolum (Aureobacterium luteolum).